The sequence spans 227 residues: Translation initiation factor 6 (227 aa).

Belongs to the eIF-6 family.

Functionally, binds to the 50S ribosomal subunit and prevents its association with the 30S ribosomal subunit to form the 70S initiation complex. This Pyrococcus abyssi (strain GE5 / Orsay) protein is Translation initiation factor 6.